Reading from the N-terminus, the 411-residue chain is Protrudin (411 aa).

The segment at 1–27 is disordered; that stretch reads MQTSEREGSGPELSPSVMPEAPLESPP. Topologically, residues 1–66 are cytoplasmic; it reads MQTSEREGSG…AGDGVRYLLR (66 aa). The segment at 1 to 92 is sufficient for homooligomerization; it reads MQTSEREGSG…LFLTLNEGAW (92 aa). Residues 1–205 are sufficient for localization to endoplasmic reticulum tubular network and for interactions with REEP1, REEP5, ATL1, ATL2, ATL3 and SPAST; the sequence is MQTSEREGSG…LYLLPLCWVL (205 aa). Residues 51-64 form a necessary for interaction with RAB11A and function in neurite outgrowth region; that stretch reads LEPLKDAGDGVRYL. Residues 67-87 traverse the membrane as a helical segment; sequence WQMPLCSLLTCLGLNVLFLTL. A topological domain (lumenal) is located at residue asparagine 88. A helical transmembrane segment spans residues 89 to 109; sequence EGAWYSVGALMISVPALLGYL. The Cytoplasmic portion of the chain corresponds to 110–187; the sequence is QEVCRARLPD…NPVVSSQFYG (78 aa). Residues 188 to 208 constitute an intramembrane region (helical); the sequence is ALLGTVCMLYLLPLCWVLTLL. Topologically, residues 209–411 are cytoplasmic; sequence NSTLFLGNVE…CASCNQTLSK (203 aa). Positions 234–286 are disordered; it reads MNPKQEEHAFESPPPPDVGGKDGLMDSTPALTPTEDLTPGSVEEAEEAEPDEE. Positions 271–361 are necessary for interaction with KIF5A; sequence TPGSVEEAEE…GCSATFSVLK (91 aa). Residues 276–286 show a composition bias toward acidic residues; sequence EEAEEAEPDEE. Residues 286–292 are necessary for interaction with VAPA and function in cell projections formation; it reads EFKDAIE. The FYVE-type zinc finger occupies 344-410; it reads TNNFGNCTGC…VCASCNQTLS (67 aa). Zn(2+)-binding residues include cysteine 350, cysteine 353, cysteine 366, cysteine 369, cysteine 374, cysteine 377, cysteine 402, and cysteine 405.

In terms of assembly, can form homooligomers (monomers, dimers and tetramers). Interacts with RAB11A (GDP-bound form); regulates RAB11A. Interacts with FKBP8; may negatively regulate ZFYVE27 phosphorylation. Interacts with VAPA (via MSP domain); may regulate ZFYVE27 retention in the endoplasmic reticulum and its function in cell projections formation. Interacts with VAPB (via MSP domain). Interacts with REEP1, REEP5 and ATL1. Interacts with ATL2, ATL3 and SPAST. Interacts with KIF5A and RTN3. Interacts with RAB11B (GDP-bound form), SURF4, KIF5B and KIF5C. In terms of processing, phosphorylated. Phosphorylation is induced by NGF through the MAPK/ERK pathway and modulates interaction with RAB11A.

It localises to the recycling endosome membrane. Its subcellular location is the endoplasmic reticulum membrane. The protein resides in the cell projection. The protein localises to the growth cone membrane. Functionally, key regulator of RAB11-dependent vesicular trafficking during neurite extension through polarized membrane transport. Promotes axonal elongation and contributes to the establishment of neuronal cell polarity. Involved in nerve growth factor-induced neurite formation in VAPA-dependent manner. Contributes to both the formation and stabilization of the tubular ER network. Involved in ER morphogenesis by regulating the sheet-to-tubule balance and possibly the density of tubule interconnections. Acts as an adapter protein and facilitates the interaction of KIF5A with VAPA, VAPB, SURF4, RAB11A, RAB11B and RTN3 and the ZFYVE27-KIF5A complex contributes to the transport of these proteins in neurons. Can induce formation of neurite-like membrane protrusions in non-neuronal cells in a KIF5A/B-dependent manner. This Homo sapiens (Human) protein is Protrudin (ZFYVE27).